The sequence spans 544 residues: NEDD4-binding protein 3 (544 aa).

Disordered stretches follow at residues 61 to 84 (LPKK…ADYA), 116 to 252 (SVFK…EFSC), 335 to 365 (KELR…PEEE), and 430 to 465 (QEQA…RDSA). Serine 176 carries the post-translational modification Phosphoserine. The span at 186 to 222 (PSLSDSSSGGSFGRSPGTGPSPFSSSLGHLNHLGGSL) shows a compositional bias: low complexity. Residues 294 to 530 (LAELKRLYVE…LEQELRALRE (237 aa)) are a coiled coil.

This sequence belongs to the N4BP3 family. As to quaternary structure, binds NEDD4. Interacts with 14-3-3 proteins. Interacts with MAVS.

The protein localises to the cytoplasmic vesicle. It is found in the cell projection. It localises to the axon. The protein resides in the dendrite. Functionally, plays a positive role in the antiviral innate immune signaling pathway. Mechanistically, interacts with MAVS and functions as a positive regulator to promote 'Lys-63'-linked polyubiquitination of MAVS and thus strengthens the interaction between MAVS and TRAF2. Also plays a role in axon and dendrite arborization during cranial nerve development. May also be important for neural crest migration and early development of other anterior structures including eye, brain and cranial cartilage. The sequence is that of NEDD4-binding protein 3 (N4BP3) from Homo sapiens (Human).